Consider the following 63-residue polypeptide: Large ribosomal subunit protein uL29 (63 aa).

Belongs to the universal ribosomal protein uL29 family.

This is Large ribosomal subunit protein uL29 from Klebsiella pneumoniae (strain 342).